The chain runs to 67 residues: Alpha-conotoxin-like Qc1.1b (67 aa).

The first 21 residues, 1-21 (MGMRMMFTMFLLVVLAITVVS), serve as a signal peptide directing secretion. A propeptide spanning residues 22 to 46 (FTSDHASDGRNTAANDKASKLMALR) is cleaved from the precursor. 2 disulfides stabilise this stretch: C49–C55 and C50–C63. The segment at 51–53 (DNP) is lacks the Ser-Xaa-Pro motif that is crucial for potent interaction with nAChR.

The protein belongs to the conotoxin A superfamily. In terms of tissue distribution, expressed by the venom duct.

It localises to the secreted. Alpha-conotoxins act on postsynaptic membranes, they bind to the nicotinic acetylcholine receptors (nAChR) and thus inhibit them. Has possibly a distinct nAChR binding mode from other alpha-conotoxins, due to a different three residue motif (lacks the Ser-Xaa-Pro motif). The protein is Alpha-conotoxin-like Qc1.1b of Conus quercinus (Oak cone).